Reading from the N-terminus, the 1088-residue chain is RNA-directed RNA polymerase (1088 aa).

Positions 501–687 (LSYGDVTRFL…AKRYIAGGKI (187 aa)) constitute a RdRp catalytic domain.

It belongs to the reoviridae RNA-directed RNA polymerase family. As to quaternary structure, interacts with VP3 (Potential). Interacts with VP2; this interaction activates VP1. Interacts with NSP5; this interaction is probably necessary for the formation of functional virus factories. Interacts with NSP2; this interaction is weak. The cofactor is Mg(2+).

Its subcellular location is the virion. The catalysed reaction is RNA(n) + a ribonucleoside 5'-triphosphate = RNA(n+1) + diphosphate. Its function is as follows. RNA-directed RNA polymerase that is involved in both transcription and genome replication. Together with VP3 capping enzyme, forms an enzyme complex positioned near the channels situated at each of the five-fold vertices of the core. Following infection, the outermost layer of the virus is lost, leaving a double-layered particle (DLP) made up of the core and VP6 shell. VP1 then catalyzes the transcription of fully conservative plus-strand genomic RNAs that are extruded through the DLP's channels into the cytoplasm where they function as mRNAs for translation of viral proteins. One copy of each of the viral (+)RNAs is also recruited during core assembly, together with newly synthesized polymerase complexes and VP2. The polymerase of these novo-formed particles catalyzes the synthesis of complementary minus-strands leading to dsRNA formation. To do so, the polymerase specifically recognizes and binds 4 bases 5'-UGUG-3' in the conserved 3'-sequence of plus-strand RNA templates. VP2 presumably activates the autoinhibited VP1-RNA complex to coordinate packaging and genome replication. Once dsRNA synthesis is complete, the polymerase switches to the transcriptional mode, thus providing secondary transcription. The sequence is that of RNA-directed RNA polymerase from Bos taurus (Bovine).